We begin with the raw amino-acid sequence, 298 residues long: uncharacterized protein (298 aa).

To M.tuberculosis Rv1486c, M.bovis Mb1522c and M.avium MAV321.

This is an uncharacterized protein from Mycobacterium leprae (strain TN).